The following is a 162-amino-acid chain: Functional amyloid chaperone FapA (162 aa).

A signal peptide spans 1–28 (MSGSSLRIVVPALLVIVGSVPVSLPAHA).

This sequence belongs to the FapA family. As to quaternary structure, monomer in solution. Interacts with FapC but not FapB in vitro.

It is found in the periplasm. An intrinsically disordered chaperone for fibril amyloid FapC that guards against fibrillation within the periplasm. Upon overexpression of the endogenous six-gene locus (fapA-fapF), cells form large clumps during liquid growth, make large amounts of biofilm and produce amyloid fibrils. The polypeptide is Functional amyloid chaperone FapA (Pseudomonas aeruginosa (strain ATCC 15692 / DSM 22644 / CIP 104116 / JCM 14847 / LMG 12228 / 1C / PRS 101 / PAO1)).